The sequence spans 291 residues: GTPase Era (291 aa).

In terms of domain architecture, Era-type G spans 2–167 (KSGFVSIIGR…LDEIVKCLNE (166 aa)). The G1 stretch occupies residues 10-17 (GRTNAGKS). 10 to 17 (GRTNAGKS) contributes to the GTP binding site. The interval 36–40 (NATRR) is G2. A G3 region spans residues 57–60 (DTPG). Residues 57 to 61 (DTPGL) and 116 to 119 (NKVD) contribute to the GTP site. The segment at 116–119 (NKVD) is G4. Residues 146-148 (YSS) form a G5 region. The region spanning 186–274 (YRDFILESIY…LLKLFVTVKK (89 aa)) is the KH type-2 domain.

This sequence belongs to the TRAFAC class TrmE-Era-EngA-EngB-Septin-like GTPase superfamily. Era GTPase family. As to quaternary structure, monomer.

Its subcellular location is the cytoplasm. It localises to the cell inner membrane. Functionally, an essential GTPase that binds both GDP and GTP, with rapid nucleotide exchange. Plays a role in 16S rRNA processing and 30S ribosomal subunit biogenesis and possibly also in cell cycle regulation and energy metabolism. The sequence is that of GTPase Era from Campylobacter jejuni subsp. doylei (strain ATCC BAA-1458 / RM4099 / 269.97).